A 337-amino-acid polypeptide reads, in one-letter code: 2-ketoarginine methyltransferase (337 aa).

It belongs to the 2-ketoarginine methyltransferase family.

It catalyses the reaction 5-guanidino-2-oxopentanoate + S-adenosyl-L-methionine = (3R)-5-guanidino-3-methyl-2-oxopentanoate + S-adenosyl-L-homocysteine + H(+). The protein operates within antibiotic biosynthesis. Its function is as follows. S-adenosyl-L-methionine-dependent methyltransferase involved in the formation of the rare amino acid 3-methylarginine (MeArg), which is incorporated into the peptidyl nucleoside antibiotic arginomycin. Transfers the methyl group from S-adenosyl-L-methionine into 5-guanidino-2-oxopentanoate acid to yield 5-guanidino-3-methyl-2-oxopentanoate, a precursor of MeArg. This is 2-ketoarginine methyltransferase from Streptomyces arginensis.